Consider the following 395-residue polypeptide: Phosphopentomutase (395 aa).

Asp10, Asp294, His299, Asp335, His336, and His347 together coordinate Mn(2+).

The protein belongs to the phosphopentomutase family. It depends on Mn(2+) as a cofactor.

It localises to the cytoplasm. The catalysed reaction is 2-deoxy-alpha-D-ribose 1-phosphate = 2-deoxy-D-ribose 5-phosphate. It carries out the reaction alpha-D-ribose 1-phosphate = D-ribose 5-phosphate. It participates in carbohydrate degradation; 2-deoxy-D-ribose 1-phosphate degradation; D-glyceraldehyde 3-phosphate and acetaldehyde from 2-deoxy-alpha-D-ribose 1-phosphate: step 1/2. In terms of biological role, isomerase that catalyzes the conversion of deoxy-ribose 1-phosphate (dRib-1-P) and ribose 1-phosphate (Rib-1-P) to deoxy-ribose 5-phosphate (dRib-5-P) and ribose 5-phosphate (Rib-5-P), respectively. The polypeptide is Phosphopentomutase (Actinobacillus succinogenes (strain ATCC 55618 / DSM 22257 / CCUG 43843 / 130Z)).